The primary structure comprises 1663 residues: Cortactin-binding protein 2 (1663 aa).

Disordered stretches follow at residues 1–23, 203–222, 352–440, 454–478, and 498–616; these read MATDGASCEPDLSRAPEDAAGAA, KKKTNELEEELSTEKRRSTE, ARPG…LHPG, GNANDPDQNGNTTQSPPSRDVSPTS, and RFTS…PKPS. Residues 119–276 are a coiled coil; the sequence is KKMQERMSAQ…EQLKRGSDSK (158 aa). The segment covering 384–396 has biased composition (low complexity); it reads NGPSTGSTPDPTS. The span at 411–422 shows a compositional bias: polar residues; that stretch reads QTPGIAPQNSQA. Arg-498 bears the Asymmetric dimethylarginine mark. The segment covering 583-593 has biased composition (polar residues); the sequence is TVASPPSSLPQ. ANK repeat units follow at residues 709–739, 743–772, 776–805, 809–838, and 842–871; these read GRPTLLQQAAAQGNVTLLSMLLNEEGLDINY, DGHSALYSAAKNGHTDCVRLLLSAEAQVNA, NGFTPLCAAAAQGHFECVELLIAYDANINH, GGQTPLYLACKNGNKECIKLLLEAGTNRSV, and DGWTPVHAAVDTGNVDSLKLLMYHRILARG. The interval 876–897 is disordered; the sequence is EEGSESSVFDLDGGEESPEGIS. The stretch at 912-942 is one ANK 6 repeat; the sequence is EGWTAAHIAASKGFKNCLEILCRHGGLEPER. The tract at residues 1446 to 1485 is disordered; that stretch reads NKKKGESGAWRKVNTSPRRKSGRFSLPTWNKPDLSTEGMK. The residue at position 1524 (Ser-1524) is a Phosphoserine. 2 disordered regions span residues 1580–1602 and 1615–1663; these read SQKEVSPLSSHQTTECSNSKSKT and VPRS…KPNK. A compositionally biased stretch (polar residues) spans 1582-1599; sequence KEVSPLSSHQTTECSNSK. Positions 1624 to 1638 are enriched in low complexity; sequence SQNTKRSSSSSNTRQ. Residues 1645–1663 show a composition bias toward basic and acidic residues; the sequence is SKEENWNLHKNEHLEKPNK.

Interacts with CTTN/cortactin SH3 domain. Interacts with STRN, STRN4/zinedin and MOB4/phocein; this interactions mediate the association with the STRIPAK core complex and may regulate dendritic spine distribution of the STRIPAK complex in hippocampal neurons. Activation of glutamate receptors weakens the interaction with STRN and STRN4.

It localises to the cytoplasm. Its subcellular location is the cell cortex. The protein localises to the cell projection. It is found in the dendritic spine. Regulates the dendritic spine distribution of CTTN/cortactin in hippocampal neurons, and thus controls dendritic spinogenesis and dendritic spine maintenance. Associates with the striatin-interacting phosphatase and kinase (STRIPAK) core complex to regulate dendritic spine distribution of the STRIPAK complex in hippocampal neurons. The sequence is that of Cortactin-binding protein 2 (CTTNBP2) from Nomascus leucogenys (Northern white-cheeked gibbon).